We begin with the raw amino-acid sequence, 432 residues long: RNA exonuclease 4 (432 aa).

Residues Ala42–Lys54 are compositionally biased toward basic residues. The tract at residues Ala42–Ser177 is disordered. A compositionally biased stretch (basic and acidic residues) spans Lys121–Lys137. Ser123 is subject to Phosphoserine. Lys127 participates in a covalent cross-link: Glycyl lysine isopeptide (Lys-Gly) (interchain with G-Cter in SUMO2). Residues Lys230–Ile381 form the Exonuclease domain.

This sequence belongs to the REXO4 family. Can bind ESR1 and ESR2. This interaction is abrogated by estrogen and augmented by tamoxifen treatment.

The protein localises to the nucleus. It localises to the nucleolus. Functionally, may function as an exonuclease. The chain is RNA exonuclease 4 (Rexo4) from Mus musculus (Mouse).